The primary structure comprises 2894 residues: Bifunctional DNA-directed RNA polymerase subunit beta-beta' (2894 aa).

Residues 1–1378 (MANFTKLKNR…DVNIYGDEQD (1378 aa)) form a DNA-directed RNA polymerase subunit beta region. Positions 1385–2894 (PIAIKEDERP…QEEYEEDEEE (1510 aa)) are DNA-directed RNA polymerase subunit beta'. Positions 1450, 1452, 1465, and 1468 each coordinate Zn(2+). Mg(2+) is bound by residues aspartate 1849, aspartate 1851, and aspartate 1853. Cysteine 2179, cysteine 2253, cysteine 2260, and cysteine 2263 together coordinate Zn(2+).

It in the N-terminal section; belongs to the RNA polymerase beta chain family. In the C-terminal section; belongs to the RNA polymerase beta' chain family. As to quaternary structure, the RNAP catalytic core consists of 2 alpha, 1 beta/beta' and 1 omega subunit. When a sigma factor is associated with the core the holoenzyme is formed, which can initiate transcription. Requires Mg(2+) as cofactor. It depends on Zn(2+) as a cofactor.

It catalyses the reaction RNA(n) + a ribonucleoside 5'-triphosphate = RNA(n+1) + diphosphate. In terms of biological role, DNA-dependent RNA polymerase catalyzes the transcription of DNA into RNA using the four ribonucleoside triphosphates as substrates. The polypeptide is Bifunctional DNA-directed RNA polymerase subunit beta-beta' (rpoBC) (Helicobacter hepaticus (strain ATCC 51449 / 3B1)).